The primary structure comprises 1758 residues: RanBP2-like and GRIP domain-containing protein 3 (1758 aa).

S21 carries the phosphoserine modification. The stretch at 60–93 is one TPR 1 repeat; that stretch reads PRAHRFLGLLYELEENTEKAVECYRRSVELNPTQ. Residues 176–229 adopt a coiled-coil conformation; the sequence is RSTKRLKDAVARCHEAERNIALRSSLEWNSCVVQTLKEYLESLQCLESDKSDWR. Residues 584–617 form a TPR 2 repeat; it reads QKMGSGLNSFYDQREYIGRSVHYWKKVLPLLKII. Residues 761–805 form a disordered region; it reads GPLYKNGSLRNADSEIKHSTPSPTKYSLSPSKSYKYSPKTPPRWA. Residues 779 to 798 show a composition bias toward low complexity; sequence STPSPTKYSLSPSKSYKYSP. Residues 805 to 837 are a coiled coil; the sequence is AEDQNSLLKMIRQEVKAIKEEMQELKLNSSKSA. The region spanning 1037–1173 is the RanBD1 1 domain; sequence HFEPVVQMPE…FEECQRLLLD (137 aa). Disordered regions lie at residues 1216-1248, 1307-1335, and 1581-1622; these read VAEE…PTLE, AKLN…GQYF, and NNSE…KNLS. Over residues 1236 to 1245 the composition is skewed to polar residues; the sequence is IKPNAENTGP. The segment covering 1318–1330 has biased composition (acidic residues); it reads TDEESDVTQEEER. One can recognise a RanBD1 2 domain in the interval 1334–1470; that stretch reads YFEPVVPLPD…FDEAKTAQEK (137 aa). Over residues 1581-1594 the composition is skewed to polar residues; it reads NNSETSSVAQSGSE. A compositionally biased stretch (basic and acidic residues) spans 1595–1618; the sequence is SKVEPKKCELSKNSDIEQSSDSKV. The GRIP domain maps to 1703-1753; that stretch reads QEVSAANVEHLKNVLLQFIFLKPGSERERLLPVINTMLQLSLEEKGKLAAV.

This Homo sapiens (Human) protein is RanBP2-like and GRIP domain-containing protein 3 (RGPD3).